The following is an 87-amino-acid chain: Toxin CngtIII (87 aa).

Residues 1-19 (MNSLLMITACLVLFGTVWA) form the signal peptide. An LCN-type CS-alpha/beta domain is found at 20–85 (KEGYLVNKST…TYPLPNKTCS (66 aa)). 4 cysteine pairs are disulfide-bonded: Cys31–Cys84, Cys35–Cys60, Cys44–Cys65, and Cys48–Cys67.

Belongs to the long (4 C-C) scorpion toxin superfamily. Sodium channel inhibitor family. Beta subfamily. In terms of tissue distribution, expressed by the venom gland.

Its subcellular location is the secreted. Functionally, beta toxins bind voltage-independently at site-4 of sodium channels (Nav) and shift the voltage of activation toward more negative potentials thereby affecting sodium channel activation and promoting spontaneous and repetitive firing. In Centruroides noxius (Mexican scorpion), this protein is Toxin CngtIII.